Reading from the N-terminus, the 96-residue chain is Co-chaperonin GroES (96 aa).

The protein belongs to the GroES chaperonin family. In terms of assembly, heptamer of 7 subunits arranged in a ring. Interacts with the chaperonin GroEL.

The protein localises to the cytoplasm. Its function is as follows. Together with the chaperonin GroEL, plays an essential role in assisting protein folding. The GroEL-GroES system forms a nano-cage that allows encapsulation of the non-native substrate proteins and provides a physical environment optimized to promote and accelerate protein folding. GroES binds to the apical surface of the GroEL ring, thereby capping the opening of the GroEL channel. This is Co-chaperonin GroES from Acinetobacter baumannii (strain AB307-0294).